Here is a 376-residue protein sequence, read N- to C-terminus: Probable allantoicase (376 aa).

It belongs to the allantoicase family.

It catalyses the reaction allantoate + H2O = (S)-ureidoglycolate + urea. The protein operates within nitrogen metabolism; (S)-allantoin degradation; (S)-ureidoglycolate from allantoate (aminidohydrolase route): step 1/1. In Streptomyces avermitilis (strain ATCC 31267 / DSM 46492 / JCM 5070 / NBRC 14893 / NCIMB 12804 / NRRL 8165 / MA-4680), this protein is Probable allantoicase.